We begin with the raw amino-acid sequence, 645 residues long: Cytochrome c oxidase subunit 1 (645 aa).

The chain crosses the membrane as a helical span at residues 8–28 (LNYFYFSMWTGLSGAALATMI). The Ca(2+) site is built by glutamate 31 and glycine 36. Histidine 54 is a Fe(II)-heme a binding site. 8 helical membrane passes run 56-76 (LIMV…NFLI), 90-110 (LNSI…KIAF), 247-267 (VLSV…LTLI), 282-302 (VLIP…AIVT), 337-357 (LFWF…FGVA), 376-396 (IWAV…HMYL), 410-430 (ITIM…LTLA), and 438-458 (LVFL…FTGM). Histidine 343 lines the Cu cation pocket. Residues 343–347 (HPEVY) constitute a cross-link (1'-histidyl-3'-tyrosine (His-Tyr)). Position 347 (tyrosine 347) interacts with O2. Histidine 392 and histidine 393 together coordinate Cu cation. Positions 470 and 471 each coordinate Mg(2+). 3 helical membrane-spanning segments follow: residues 475 to 495 (VVAH…FTGL), 513 to 533 (FLHL…MFFL), and 555 to 575 (LASC…FGIF). Histidine 478 is a heme a3 binding site. Residue histidine 480 coordinates Fe(II)-heme a.

The protein belongs to the heme-copper respiratory oxidase family. As to quaternary structure, component of the cytochrome c oxidase (complex IV, CIV), a multisubunit enzyme composed of a catalytic core of 3 subunits and several supernumerary subunits. The complex exists as a monomer or a dimer and forms supercomplexes (SCs) in the inner mitochondrial membrane with ubiquinol-cytochrome c oxidoreductase (cytochrome b-c1 complex, complex III, CIII). Heme is required as a cofactor. The cofactor is Cu cation.

The protein resides in the mitochondrion inner membrane. The enzyme catalyses 4 Fe(II)-[cytochrome c] + O2 + 8 H(+)(in) = 4 Fe(III)-[cytochrome c] + 2 H2O + 4 H(+)(out). It functions in the pathway energy metabolism; oxidative phosphorylation. In terms of biological role, component of the cytochrome c oxidase, the last enzyme in the mitochondrial electron transport chain which drives oxidative phosphorylation. The respiratory chain contains 3 multisubunit complexes succinate dehydrogenase (complex II, CII), ubiquinol-cytochrome c oxidoreductase (cytochrome b-c1 complex, complex III, CIII) and cytochrome c oxidase (complex IV, CIV), that cooperate to transfer electrons derived from NADH and succinate to molecular oxygen, creating an electrochemical gradient over the inner membrane that drives transmembrane transport and the ATP synthase. Cytochrome c oxidase is the component of the respiratory chain that catalyzes the reduction of oxygen to water. Electrons originating from reduced cytochrome c in the intermembrane space (IMS) are transferred via the dinuclear copper A center (CU(A)) of subunit 2 and heme A of subunit 1 to the active site in subunit 1, a binuclear center (BNC) formed by heme A3 and copper B (CU(B)). The BNC reduces molecular oxygen to 2 water molecules using 4 electrons from cytochrome c in the IMS and 4 protons from the mitochondrial matrix. The chain is Cytochrome c oxidase subunit 1 (COI) from Paramecium tetraurelia.